A 650-amino-acid polypeptide reads, in one-letter code: tRNA-dihydrouridine(47) synthase [NAD(P)(+)]-like (650 aa).

2 disordered regions span residues 1-24 and 46-120; these read MAEG…GALE and EAKG…NYDK. A2 carries the post-translational modification N-acetylalanine. Composition is skewed to basic and acidic residues over residues 48–58 and 70–79; these read KGQEKTCRETE and PEAKRIRLED. Positions 101–113 are enriched in basic residues; sequence KRARGQNKGRPHV. C3H1-type zinc fingers lie at residues 118–148 and 156–186; these read YDKN…HDVG and ADLG…HLRP. Residues 235 to 284 are disordered; it reads FSQGPTPAAAVPEGTAAEGAPRQENCGAQQVPAGPGTSTPPSSPVRTCGP. S236 bears the Phosphoserine mark. T273 carries the phosphothreonine modification. 2 positions are modified to phosphoserine: S276 and S277. FMN contacts are provided by residues 311-313 and Q365; that span reads PLT. C396 acts as the Proton donor in catalysis. K416 is covalently cross-linked (Glycyl lysine isopeptide (Lys-Gly) (interchain with G-Cter in SUMO2)). FMN contacts are provided by residues K435, H465, 497 to 499, and 520 to 521; these read NGD and AR.

The protein belongs to the Dus family. Dus3 subfamily. FMN serves as cofactor.

It catalyses the reaction 5,6-dihydrouridine(47) in tRNA + NAD(+) = uridine(47) in tRNA + NADH + H(+). The catalysed reaction is 5,6-dihydrouridine(47) in tRNA + NADP(+) = uridine(47) in tRNA + NADPH + H(+). The enzyme catalyses a 5,6-dihydrouridine in mRNA + NAD(+) = a uridine in mRNA + NADH + H(+). It carries out the reaction a 5,6-dihydrouridine in mRNA + NADP(+) = a uridine in mRNA + NADPH + H(+). Its function is as follows. Catalyzes the synthesis of dihydrouridine, a modified base, in various RNAs, such as tRNAs, mRNAs and some long non-coding RNAs (lncRNAs). Mainly modifies the uridine in position 47 (U47) in the D-loop of most cytoplasmic tRNAs. Also able to mediate the formation of dihydrouridine in some mRNAs, thereby regulating their translation. The chain is tRNA-dihydrouridine(47) synthase [NAD(P)(+)]-like from Homo sapiens (Human).